The following is a 75-amino-acid chain: Translational regulator CsrA (75 aa).

This sequence belongs to the CsrA/RsmA family. In terms of assembly, homodimer; the beta-strands of each monomer intercalate to form a hydrophobic core, while the alpha-helices form wings that extend away from the core.

The protein resides in the cytoplasm. Functionally, a translational regulator that binds mRNA to regulate translation initiation and/or mRNA stability. Usually binds in the 5'-UTR at or near the Shine-Dalgarno sequence preventing ribosome-binding, thus repressing translation. Its main target seems to be the major flagellin gene, while its function is anatagonized by FliW. This chain is Translational regulator CsrA, found in Acetivibrio thermocellus (strain ATCC 27405 / DSM 1237 / JCM 9322 / NBRC 103400 / NCIMB 10682 / NRRL B-4536 / VPI 7372) (Clostridium thermocellum).